A 273-amino-acid polypeptide reads, in one-letter code: MSKLQEIIIEAFERRADITPRNVETHVKDAVMEAIDMLDRGTARVAEKKDGEWIVNDWLKKAVLLSFRIHDNQFIKGGFTNYYDKVPSKWADANSRDFREGGARVVPPATARKGSYIAPGVVLMPSYVNIGAYVDSGTMVDTWATVGSCAQIGKNVHLSGGVGIGGVLEPLQAAPTIIEDNCFIGARSEVVEGVIVEEGSVISMGVYIGQSTRIYDREKDEILYGRVPAGSVVVSGNLPSKDGKYSLYCAVIVKKVDEKTRSKVGINELLRDI.

2 residues coordinate substrate: R104 and D141.

Belongs to the transferase hexapeptide repeat family. As to quaternary structure, homotrimer.

The protein resides in the cytoplasm. The catalysed reaction is (S)-2,3,4,5-tetrahydrodipicolinate + succinyl-CoA + H2O = (S)-2-succinylamino-6-oxoheptanedioate + CoA. It functions in the pathway amino-acid biosynthesis; L-lysine biosynthesis via DAP pathway; LL-2,6-diaminopimelate from (S)-tetrahydrodipicolinate (succinylase route): step 1/3. In Thioalkalivibrio sulfidiphilus (strain HL-EbGR7), this protein is 2,3,4,5-tetrahydropyridine-2,6-dicarboxylate N-succinyltransferase.